The chain runs to 276 residues: ADP-dependent (S)-NAD(P)H-hydrate dehydratase (276 aa).

Residues 5–269 form the YjeF C-terminal domain; that stretch reads TPKAMCAWIP…EELPTYLKIF (265 aa). (6S)-NADPHX is bound by residues A40, G103, and H152. G211 serves as a coordination point for AMP. D212 is a binding site for (6S)-NADPHX.

The protein belongs to the NnrD/CARKD family. In terms of assembly, homotetramer. The cofactor is Mg(2+).

The enzyme catalyses (6S)-NADHX + ADP = AMP + phosphate + NADH + H(+). The catalysed reaction is (6S)-NADPHX + ADP = AMP + phosphate + NADPH + H(+). Catalyzes the dehydration of the S-form of NAD(P)HX at the expense of ADP, which is converted to AMP. Together with NAD(P)HX epimerase, which catalyzes the epimerization of the S- and R-forms, the enzyme allows the repair of both epimers of NAD(P)HX, a damaged form of NAD(P)H that is a result of enzymatic or heat-dependent hydration. This is ADP-dependent (S)-NAD(P)H-hydrate dehydratase from Listeria monocytogenes serovar 1/2a (strain ATCC BAA-679 / EGD-e).